The sequence spans 434 residues: UDP-N-acetylglucosamine 1-carboxyvinyltransferase (434 aa).

34–35 (KN) contributes to the phosphoenolpyruvate binding site. Arg104 contacts UDP-N-acetyl-alpha-D-glucosamine. The active-site Proton donor is Cys128. 2-(S-cysteinyl)pyruvic acid O-phosphothioketal is present on Cys128. UDP-N-acetyl-alpha-D-glucosamine-binding residues include Asp319 and Ile341.

It belongs to the EPSP synthase family. MurA subfamily.

The protein localises to the cytoplasm. It catalyses the reaction phosphoenolpyruvate + UDP-N-acetyl-alpha-D-glucosamine = UDP-N-acetyl-3-O-(1-carboxyvinyl)-alpha-D-glucosamine + phosphate. It functions in the pathway cell wall biogenesis; peptidoglycan biosynthesis. Functionally, cell wall formation. Adds enolpyruvyl to UDP-N-acetylglucosamine. The sequence is that of UDP-N-acetylglucosamine 1-carboxyvinyltransferase from Prochlorococcus marinus (strain MIT 9313).